The chain runs to 393 residues: Cyclic GMP-AMP synthase-like receptor 1 (393 aa).

Mg(2+) contacts are provided by glutamate 89, aspartate 91, and aspartate 205. 89–91 (EFD) is a binding site for ATP. GTP-binding positions include aspartate 205 and 251 to 258 (RASFYEAE). ATP-binding positions include 255 to 258 (YEAE), lysine 276, and 289 to 293 (SYHIK).

Belongs to the mab-21 family. Requires Mg(2+) as cofactor. Mn(2+) is required as a cofactor.

The catalysed reaction is GTP + ATP = 3',2'-cGAMP + 2 diphosphate. The enzyme catalyses GTP + ATP = pppA(2'-5')pG + diphosphate. It catalyses the reaction pppA(2'-5')pG = 3',2'-cGAMP + diphosphate. With respect to regulation, the enzyme activity is specifically activated by double-stranded RNA (dsRNA). Recognizes long dsRNA (&gt;30 bp) with no preference for 5' RNA phosphorylation. Its function is as follows. Nucleotidyltransferase that catalyzes the formation of cyclic GMP-AMP (3',2'-cGAMP) from ATP and GTP and plays a key role in innate immunity. Synthesizes 3',2'-cGAMP in a two-step reaction through production of the linear intermediate pppA(2'-5')pG. Acts as a key sensor of double-stranded RNA (dsRNA), the presence of dsRNA in the cytoplasm being a danger signal that triggers the immune responses. Directly binds dsRNA longer than 35 bp, activating the nucleotidyltransferase activity, leading to synthesis of 3',2'-cGAMP, a second messenger that binds to and activates Sting, thereby triggering the antiviral immune response via activation of the NF-kappa-B transcription factor Rel (Relish). The chain is Cyclic GMP-AMP synthase-like receptor 1 from Drosophila simulans (Fruit fly).